The following is a 456-amino-acid chain: uncharacterized protein (456 aa).

In terms of domain architecture, YrdC-like spans 277 to 440; it reads IKNTKTIKQL…TKQLVRTTAK (164 aa).

This is an uncharacterized protein from Mycoplasma genitalium (strain ATCC 33530 / DSM 19775 / NCTC 10195 / G37) (Mycoplasmoides genitalium).